We begin with the raw amino-acid sequence, 455 residues long: Regulatory protein LuxO (455 aa).

The Response regulatory domain occupies 1 to 112 (MVEDTASVAA…RLRVTVNNAI (112 aa)). Aspartate 47 bears the 4-aspartylphosphate mark. The Sigma-54 factor interaction domain maps to 132 to 361 (FIGSSQTMQA…LQNVLRNVVV (230 aa)). ATP-binding positions include 160–167 (GESGTGKE) and 223–232 (ADGGTLFLDE).

Involved in the regulation of different processes depending on the cell density. Acts together with sigma-54 to repress, perhaps indirectly, some genes. In Vibrio cholerae serotype O1 (strain ATCC 39315 / El Tor Inaba N16961), this protein is Regulatory protein LuxO (luxO).